Reading from the N-terminus, the 284-residue chain is Nucleotide-binding protein NGK_0463 (284 aa).

An ATP-binding site is contributed by 8-15 (GLSGSGKS). 58–61 (DVRS) contacts GTP.

The protein belongs to the RapZ-like family.

Displays ATPase and GTPase activities. The chain is Nucleotide-binding protein NGK_0463 from Neisseria gonorrhoeae (strain NCCP11945).